We begin with the raw amino-acid sequence, 388 residues long: Acyl-CoA dehydrogenase fadE12 (388 aa).

The protein belongs to the acyl-CoA dehydrogenase family. FAD serves as cofactor.

The catalysed reaction is a 2,3-saturated acyl-CoA + A = a 2,3-dehydroacyl-CoA + AH2. This Mycobacterium bovis (strain ATCC BAA-935 / AF2122/97) protein is Acyl-CoA dehydrogenase fadE12 (fadE12).